The chain runs to 102 residues: Small ribosomal subunit protein uS10 (102 aa).

It belongs to the universal ribosomal protein uS10 family. As to quaternary structure, part of the 30S ribosomal subunit.

Its function is as follows. Involved in the binding of tRNA to the ribosomes. The protein is Small ribosomal subunit protein uS10 of Xanthobacter autotrophicus (strain ATCC BAA-1158 / Py2).